A 157-amino-acid polypeptide reads, in one-letter code: Small ribosomal subunit protein uS7 (157 aa).

The protein belongs to the universal ribosomal protein uS7 family. Part of the 30S ribosomal subunit. Contacts proteins S9 and S11.

Its function is as follows. One of the primary rRNA binding proteins, it binds directly to 16S rRNA where it nucleates assembly of the head domain of the 30S subunit. Is located at the subunit interface close to the decoding center, probably blocks exit of the E-site tRNA. This chain is Small ribosomal subunit protein uS7, found in Francisella tularensis subsp. holarctica (strain OSU18).